Here is a 48-residue protein sequence, read N- to C-terminus: uncharacterized protein (48 aa).

This is an uncharacterized protein from Methanocaldococcus jannaschii (strain ATCC 43067 / DSM 2661 / JAL-1 / JCM 10045 / NBRC 100440) (Methanococcus jannaschii).